Consider the following 156-residue polypeptide: Endogenous retrovirus group K member 8 Pro protein (156 aa).

The Peptidase A2 domain maps to 21 to 96 (FEGLVDTGAD…IPLNLWGRDL (76 aa)). Residue aspartate 26 is part of the active site. Residues 111-156 (YSPTSQKIMTKRGYIPGKGLGKNEDGIKIPFEAKINQKREGIGYPF) form the G-patch domain.

This sequence belongs to the peptidase A2 family. HERV class-II K(HML-2) subfamily. As to quaternary structure, active as a homodimer. Autoproteolytically processed at the N-terminus. Expected C-terminal autoprocessing not detected. The sequence shown is that of the processed Pro protein.

The enzyme catalyses Processing at the authentic HIV-1 PR recognition site and release of the mature p17 matrix and the p24 capsid protein, as a result of the cleavage of the -SQNY-|-PIVQ- cleavage site.. Retroviral proteases have roles in the processing of the primary translation products and the maturation of the viral particle. Endogenous Pro proteins may have kept, lost or modified their original function during evolution. The sequence is that of Endogenous retrovirus group K member 8 Pro protein (ERVK-8) from Homo sapiens (Human).